The following is a 447-amino-acid chain: Argininosuccinate synthase (447 aa).

ATP is bound by residues 17–25 and Ala-43; that span reads AFSGGLDTS. Residue Tyr-99 participates in L-citrulline binding. 2 residues coordinate ATP: Gly-129 and Thr-131. Residues Thr-131, Asn-135, and Asp-136 each coordinate L-aspartate. Residue Asn-135 participates in L-citrulline binding. Position 136 (Asp-136) interacts with ATP. L-citrulline is bound by residues Arg-139 and Ser-192. Residue Asp-194 participates in ATP binding. The L-citrulline site is built by Thr-201, Glu-203, and Glu-280.

The protein belongs to the argininosuccinate synthase family. Type 2 subfamily. In terms of assembly, homotetramer.

The protein localises to the cytoplasm. The catalysed reaction is L-citrulline + L-aspartate + ATP = 2-(N(omega)-L-arginino)succinate + AMP + diphosphate + H(+). The protein operates within amino-acid biosynthesis; L-arginine biosynthesis; L-arginine from L-ornithine and carbamoyl phosphate: step 2/3. The polypeptide is Argininosuccinate synthase (Shigella dysenteriae serotype 1 (strain Sd197)).